The sequence spans 94 residues: Large ribosomal subunit protein bL25 (94 aa).

It belongs to the bacterial ribosomal protein bL25 family. As to quaternary structure, part of the 50S ribosomal subunit; part of the 5S rRNA/L5/L18/L25 subcomplex. Contacts the 5S rRNA. Binds to the 5S rRNA independently of L5 and L18.

Its function is as follows. This is one of the proteins that binds to the 5S RNA in the ribosome where it forms part of the central protuberance. This is Large ribosomal subunit protein bL25 from Pectobacterium atrosepticum (strain SCRI 1043 / ATCC BAA-672) (Erwinia carotovora subsp. atroseptica).